We begin with the raw amino-acid sequence, 583 residues long: Laminarase-resistance protein LRE1 (583 aa).

Residues 1–24 (MPNTHTQHVQISEPNPVNTLSTPS) show a composition bias toward polar residues. Disordered stretches follow at residues 1-31 (MPNT…HRHR) and 330-380 (LKDN…HMQH). Composition is skewed to basic and acidic residues over residues 332 to 342 (DNPRYAKDGYP) and 354 to 366 (LDSD…SGES). 2 positions are modified to phosphoserine: Ser-393 and Ser-398. Positions 457–486 (SCTPDGKEEMNRLKSNDSNEYSKSEGQIRT) are disordered. Residues 461-479 (DGKEEMNRLKSNDSNEYSK) are compositionally biased toward basic and acidic residues. 2 positions are modified to phosphoserine: Ser-516 and Ser-552.

Phosphorylated by CDC28/CDK1.

Overexpression affects chitinase expression, cell separation and budding pattern, and increases trehalose accumulation and heat resistance by inhibiting protein kinase CBK1. Overexpression also suppresses temperature-induced hyperosmosensitivity and sensitivity to cell wall degrading enzymes. Overexpression of both LRE1 and PBN1 confers resistance to laminarinase. This is Laminarase-resistance protein LRE1 (LRE1) from Saccharomyces cerevisiae (strain ATCC 204508 / S288c) (Baker's yeast).